Reading from the N-terminus, the 273-residue chain is Pre-mRNA-splicing factor CWC23 (273 aa).

Positions 15–87 (DLYALLEVSI…SLRATYNRWL (73 aa)) constitute a J domain.

This sequence belongs to the DnaJ family. Associated with the spliceosome.

It is found in the cytoplasm. The protein localises to the nucleus. Functionally, involved in pre-mRNA splicing. May be involved in endoplasmic reticulum-associated protein degradation (ERAD) and required for growth at low and high temperatures. The protein is Pre-mRNA-splicing factor CWC23 (CWC23) of Eremothecium gossypii (strain ATCC 10895 / CBS 109.51 / FGSC 9923 / NRRL Y-1056) (Yeast).